Consider the following 398-residue polypeptide: Serpin-Z1A (398 aa).

Positions 343–367 are RCL; it reads GTEAAASTAIKMVLQQARPPSVMDF.

Belongs to the serpin family.

Its function is as follows. Inhibits chymotrypsin and cathepsin G in vitro. The polypeptide is Serpin-Z1A (WZCI) (Triticum aestivum (Wheat)).